The sequence spans 66 residues: Large ribosomal subunit protein bL35 (66 aa).

Residues 1–23 (MPKMKTHRASAKRFKRTANGGLK) form a disordered region.

The protein belongs to the bacterial ribosomal protein bL35 family.

The protein is Large ribosomal subunit protein bL35 of Lactobacillus helveticus (strain DPC 4571).